The following is a 395-amino-acid chain: Putative transport protein sll0063 (395 aa).

The next 8 helical transmembrane spans lie at 24 to 44, 50 to 70, 91 to 111, 180 to 200, 245 to 265, 269 to 289, 295 to 315, and 328 to 348; these read LNAI…VLNA, IFGY…IAFL, FVFL…IPLA, VFTV…FYLL, ALGL…LFGL, VMAL…FLVA, MALQ…NGIA, and FWVL…GVIV.

It belongs to the autoinducer-2 exporter (AI-2E) (TC 2.A.86) family.

It is found in the cell membrane. In Synechocystis sp. (strain ATCC 27184 / PCC 6803 / Kazusa), this protein is Putative transport protein sll0063.